Here is a 550-residue protein sequence, read N- to C-terminus: Hydroxylamine reductase (550 aa).

[2Fe-2S] cluster is bound by residues C3, C6, C18, and C25. Residues H249, E273, C317, C405, C433, C458, E492, and K494 each coordinate hybrid [4Fe-2O-2S] cluster. At C405 the chain carries Cysteine persulfide.

Belongs to the HCP family. Requires [2Fe-2S] cluster as cofactor. Hybrid [4Fe-2O-2S] cluster is required as a cofactor.

The protein localises to the cytoplasm. It catalyses the reaction A + NH4(+) + H2O = hydroxylamine + AH2 + H(+). Its function is as follows. Catalyzes the reduction of hydroxylamine to form NH(3) and H(2)O. This is Hydroxylamine reductase from Salmonella dublin (strain CT_02021853).